The following is a 182-amino-acid chain: MTDLILKNAELQMKETIDAYVIHLRQIRTGKASGAILDKVMVNYYGSLMPLNQISQITTPEPNLIIIKPYDRNVITEAVGAIHKADLGLNPISDATLIRIPIAPLTEDVRKNLVKKVHKELEGYKIRIRNIRRDAIDEIKKVENISKDLISDNEDKIQQITDKFIKQLDDLTKEKERELMTI.

Belongs to the RRF family.

It localises to the cytoplasm. Functionally, responsible for the release of ribosomes from messenger RNA at the termination of protein biosynthesis. May increase the efficiency of translation by recycling ribosomes from one round of translation to another. This Mycoplasma capricolum subsp. capricolum (strain California kid / ATCC 27343 / NCTC 10154) protein is Ribosome-recycling factor.